Here is a 1040-residue protein sequence, read N- to C-terminus: Multidrug resistance protein MdtB (1040 aa).

Transmembrane regions (helical) follow at residues 25–45, 347–367, 369–389, 396–416, 440–460, 472–492, 537–557, 863–883, 888–908, 910–930, 968–988, and 998–1018; these read LLMA…PVAA, LMLA…NIPA, IIPG…MVFL, LTLM…IVVI, IGFT…PLLF, FAVT…TLTP, WLTL…WIVI, LGST…VLGV, FIHP…ALLA, IIAG…LIGI, ILMT…STGV, and IAMV…TPVI.

It belongs to the resistance-nodulation-cell division (RND) (TC 2.A.6) family. MdtB subfamily. As to quaternary structure, part of a tripartite efflux system composed of MdtA, MdtB and MdtC. MdtB forms a heteromultimer with MdtC.

It localises to the cell inner membrane. The chain is Multidrug resistance protein MdtB from Salmonella schwarzengrund (strain CVM19633).